A 118-amino-acid chain; its full sequence is Cytochrome b-c1 complex subunit 7 (118 aa).

Positions 1–32 (MVHLTKTLRFINNPGFRKFYYGLQGYNKYGLY) are igE-binding. Immunodominant epitope; induces specific IgE antibody production in mice. Causes degranulation of rat basophilic leukemia (RBL) cells and the release of beta-hexosaminidase from them.

Belongs to the UQCRB/QCR7 family. In terms of assembly, component of the ubiquinol-cytochrome c oxidoreductase (cytochrome b-c1 complex, complex III, CIII), a multisubunit enzyme composed of 3 respiratory subunits cytochrome b, cytochrome c1 and Rieske protein, 2 core protein subunits, and additional low-molecular weight protein subunits. The complex exists as an obligatory dimer and forms supercomplexes (SCs) in the inner mitochondrial membrane with cytochrome c oxidase (complex IV, CIV).

Its subcellular location is the mitochondrion inner membrane. Component of the ubiquinol-cytochrome c oxidoreductase, a multisubunit transmembrane complex that is part of the mitochondrial electron transport chain which drives oxidative phosphorylation. The respiratory chain contains 3 multisubunit complexes succinate dehydrogenase (complex II, CII), ubiquinol-cytochrome c oxidoreductase (cytochrome b-c1 complex, complex III, CIII) and cytochrome c oxidase (complex IV, CIV), that cooperate to transfer electrons derived from NADH and succinate to molecular oxygen, creating an electrochemical gradient over the inner membrane that drives transmembrane transport and the ATP synthase. The cytochrome b-c1 complex catalyzes electron transfer from ubiquinol to cytochrome c, linking this redox reaction to translocation of protons across the mitochondrial inner membrane, with protons being carried across the membrane as hydrogens on the quinol. In the process called Q cycle, 2 protons are consumed from the matrix, 4 protons are released into the intermembrane space and 2 electrons are passed to cytochrome c. In Dermatophagoides farinae (American house dust mite), this protein is Cytochrome b-c1 complex subunit 7.